Consider the following 98-residue polypeptide: NADH-ubiquinone oxidoreductase chain 4L (98 aa).

2 helical membrane passes run methionine 1–leucine 21 and proline 48–alanine 68.

This sequence belongs to the complex I subunit 4L family. As to quaternary structure, core subunit of respiratory chain NADH dehydrogenase (Complex I) which is composed of 45 different subunits.

It localises to the mitochondrion inner membrane. It catalyses the reaction a ubiquinone + NADH + 5 H(+)(in) = a ubiquinol + NAD(+) + 4 H(+)(out). Functionally, core subunit of the mitochondrial membrane respiratory chain NADH dehydrogenase (Complex I) which catalyzes electron transfer from NADH through the respiratory chain, using ubiquinone as an electron acceptor. Part of the enzyme membrane arm which is embedded in the lipid bilayer and involved in proton translocation. The polypeptide is NADH-ubiquinone oxidoreductase chain 4L (mt-nd4l) (Xenopus laevis (African clawed frog)).